The chain runs to 158 residues: MQGNLSAWLVKHALIHRSLGFDYQGIETLQIKPGDWHSIAVILYVYGYNYLRSQCAYDVAPGGLLASVYHLTRIEYGVDQPEEVCIKVFAPRRDPRIPSVFWVWKSVDFQERESYDMLGISYDNHPRLKRILMPESWIGWPLRKDYIAPNFYEIQDAH.

The protein belongs to the complex I 30 kDa subunit family. As to quaternary structure, NDH is composed of at least 16 different subunits, 5 of which are encoded in the nucleus.

Its subcellular location is the plastid. The protein localises to the chloroplast thylakoid membrane. The catalysed reaction is a plastoquinone + NADH + (n+1) H(+)(in) = a plastoquinol + NAD(+) + n H(+)(out). It carries out the reaction a plastoquinone + NADPH + (n+1) H(+)(in) = a plastoquinol + NADP(+) + n H(+)(out). Its function is as follows. NDH shuttles electrons from NAD(P)H:plastoquinone, via FMN and iron-sulfur (Fe-S) centers, to quinones in the photosynthetic chain and possibly in a chloroplast respiratory chain. The immediate electron acceptor for the enzyme in this species is believed to be plastoquinone. Couples the redox reaction to proton translocation, and thus conserves the redox energy in a proton gradient. This Guizotia abyssinica (Niger) protein is NAD(P)H-quinone oxidoreductase subunit J, chloroplastic.